Reading from the N-terminus, the 156-residue chain is Probable chemoreceptor glutamine deamidase CheD (156 aa).

It belongs to the CheD family.

The catalysed reaction is L-glutaminyl-[protein] + H2O = L-glutamyl-[protein] + NH4(+). Probably deamidates glutamine residues to glutamate on methyl-accepting chemotaxis receptors (MCPs), playing an important role in chemotaxis. This Bdellovibrio bacteriovorus (strain ATCC 15356 / DSM 50701 / NCIMB 9529 / HD100) protein is Probable chemoreceptor glutamine deamidase CheD.